Here is a 321-residue protein sequence, read N- to C-terminus: Thymidylate synthase (321 aa).

Positions 1–32 are disordered; it reads MVLTPTKDGPDQESMPLPADNGESPSKQQAPV. 2 positions are modified to phosphoserine: Ser24 and Ser26. The residue at position 39 (Tyr39) is a Phosphotyrosine. DUMP is bound by residues Arg56 and 181–182; that span reads RR. The Nucleophile role is filled by Cys201. Position 208 is a phosphotyrosine (Tyr208). Position 210 is a phosphoserine (Ser210). Residues 223–226, Asn234, and 264–266 each bind dUMP; these read RSAD and HVY. (6R)-5,10-methylene-5,6,7,8-tetrahydrofolate is bound at residue Asp226. Ala320 contacts (6R)-5,10-methylene-5,6,7,8-tetrahydrofolate.

This sequence belongs to the thymidylate synthase family. In terms of assembly, homodimer.

The enzyme catalyses dUMP + (6R)-5,10-methylene-5,6,7,8-tetrahydrofolate = 7,8-dihydrofolate + dTMP. It functions in the pathway pyrimidine metabolism; dTTP biosynthesis. The protein is Thymidylate synthase (Ts) of Drosophila melanogaster (Fruit fly).